The sequence spans 267 residues: Diphthine--ammonia ligase (267 aa).

Tyrosine 97 is modified (phosphotyrosine).

This sequence belongs to the Diphthine--ammonia ligase family.

It catalyses the reaction diphthine-[translation elongation factor 2] + NH4(+) + ATP = diphthamide-[translation elongation factor 2] + AMP + diphosphate + H(+). Its pathway is protein modification; peptidyl-diphthamide biosynthesis. Functionally, amidase that may catalyze the last step of diphthamide biosynthesis using ammonium and ATP. Diphthamide biosynthesis consists in the conversion of an L-histidine residue in the translation elongation factor (EEF2) to diphthamide. In Homo sapiens (Human), this protein is Diphthine--ammonia ligase.